Consider the following 225-residue polypeptide: Ras-related protein Rab-32 (225 aa).

N-acetylalanine is present on Ala-2. Positions 36, 37, 38, 39, 40, 51, 52, 54, and 57 each coordinate GTP. Residue Thr-39 participates in Mg(2+) binding. Positions 48-62 (QLFSQHYRATIGVDF) match the Switch 1 motif. Thr-57 is a Mg(2+) binding site. Ser-71 carries the phosphoserine modification. Asp-81 provides a ligand contact to Mg(2+). GTP-binding residues include Gly-84, Asn-143, Lys-144, Asp-146, Ala-175, and Lys-176. The Switch 2 motif lies at 84-97 (GQERFGNMTRVYYK). The interval 178–197 (NINIEEAARFLVEKILVNHQ) is PKA-RII subunit binding domain. Residues Cys-224 and Cys-225 are each lipidated (S-geranylgeranyl cysteine).

The protein belongs to the small GTPase superfamily. Rab family. In terms of assembly, interacts with ANKRD27. A decreased interaction with ANKRD27 seen in the presence of SGSM2. Interacts with LRRK2 (via N-terminus); this interaction results in stimulation of RAB10 phosphorylation by LRRK2. Requires Mg(2+) as cofactor. In terms of tissue distribution, widely expressed with high levels in heart, liver, kidney, bone marrow, testis, colon and fetal lung.

It is found in the mitochondrion. Its subcellular location is the mitochondrion outer membrane. The protein resides in the cytoplasmic vesicle. It localises to the phagosome. The protein localises to the phagosome membrane. It is found in the melanosome. Its subcellular location is the melanosome membrane. The catalysed reaction is GTP + H2O = GDP + phosphate + H(+). Regulated by guanine the nucleotide exchange factor (GEF) BLOC-3 complex composed of HPS1 and HPS4 which promote the exchange of bound GDP for free GTP. Regulated by the GTPase activating protein (GAP) SGSM2/RUTBC1 which increases the GTP hydrolysis activity. Inhibited by GDP dissociation inhibitors (GDIs) which prevent Rab-GDP dissociation. Its function is as follows. The small GTPases Rab are key regulators of intracellular membrane trafficking, from the formation of transport vesicles to their fusion with membranes. Rabs cycle between an inactive GDP-bound form and an active GTP-bound form that is able to recruit to membranes different set of downstream effectors directly responsible for vesicle formation, movement, tethering and fusion. Also acts as an A-kinase anchoring protein by binding to the type II regulatory subunit of protein kinase A and anchoring it to the mitochondrion. Also involved in synchronization of mitochondrial fission. Plays a role in the maturation of phagosomes that engulf pathogens, such as S.aureus and M.tuberculosis. Plays an important role in the control of melanin production and melanosome biogenesis. In concert with RAB38, regulates the proper trafficking of melanogenic enzymes TYR, TYRP1 and DCT/TYRP2 to melanosomes in melanocytes. Stimulates phosphorylation of RAB10 'Thr-73' by LRRK2. The sequence is that of Ras-related protein Rab-32 from Homo sapiens (Human).